The following is a 390-amino-acid chain: 8-amino-7-oxononanoate synthase (390 aa).

Arginine 19 is a substrate binding site. Glycine 106–tyrosine 107 lines the pyridoxal 5'-phosphate pocket. Residue histidine 131 participates in substrate binding. Residues serine 176, histidine 204, and threonine 233 each coordinate pyridoxal 5'-phosphate. An N6-(pyridoxal phosphate)lysine modification is found at lysine 236. A substrate-binding site is contributed by threonine 350.

Belongs to the class-II pyridoxal-phosphate-dependent aminotransferase family. BioF subfamily. Homodimer. Pyridoxal 5'-phosphate serves as cofactor.

It catalyses the reaction 6-carboxyhexanoyl-[ACP] + L-alanine + H(+) = (8S)-8-amino-7-oxononanoate + holo-[ACP] + CO2. Its pathway is cofactor biosynthesis; biotin biosynthesis. Catalyzes the decarboxylative condensation of pimeloyl-[acyl-carrier protein] and L-alanine to produce 8-amino-7-oxononanoate (AON), [acyl-carrier protein], and carbon dioxide. The chain is 8-amino-7-oxononanoate synthase from Pseudomonas putida (strain W619).